We begin with the raw amino-acid sequence, 153 residues long: Cytochrome c-type biogenesis protein CcmE (153 aa).

The Cytoplasmic portion of the chain corresponds to M1–R6. Residues L7–A27 traverse the membrane as a helical; Signal-anchor for type II membrane protein segment. Residues L28–P153 are Periplasmic-facing. Residues H121 and Y125 each coordinate heme. Polar residues predominate over residues L130–H141. Positions L130–P153 are disordered.

Belongs to the CcmE/CycJ family.

It is found in the cell inner membrane. Functionally, heme chaperone required for the biogenesis of c-type cytochromes. Transiently binds heme delivered by CcmC and transfers the heme to apo-cytochromes in a process facilitated by CcmF and CcmH. The protein is Cytochrome c-type biogenesis protein CcmE of Xylella fastidiosa (strain 9a5c).